The chain runs to 1129 residues: Nuclear pore complex protein 15 (1129 aa).

Belongs to the nucleoporin Nup133 family.

The protein localises to the nucleus envelope. Its subcellular location is the nucleus. The protein resides in the nuclear pore complex. In terms of biological role, important for early nematode development. The protein is Nuclear pore complex protein 15 of Caenorhabditis elegans.